A 136-amino-acid chain; its full sequence is Large ribosomal subunit protein uL16c (136 aa).

Belongs to the universal ribosomal protein uL16 family. Part of the 50S ribosomal subunit.

It localises to the plastid. The protein localises to the chloroplast. This Chlamydomonas sp. (strain WXM) protein is Large ribosomal subunit protein uL16c.